The following is a 686-amino-acid chain: DNA ligase (686 aa).

Residues 33–37 (DSVYD), 82–83 (SL), and E122 contribute to the NAD(+) site. The N6-AMP-lysine intermediate role is filled by K124. Residues R145, E182, K300, and K324 each contribute to the NAD(+) site. Zn(2+) is bound by residues C418, C421, C436, and C441. One can recognise a BRCT domain in the interval 600–686 (AVSQILAGKK…PTVESGDLHP (87 aa)).

This sequence belongs to the NAD-dependent DNA ligase family. LigA subfamily. Mg(2+) is required as a cofactor. Mn(2+) serves as cofactor.

It catalyses the reaction NAD(+) + (deoxyribonucleotide)n-3'-hydroxyl + 5'-phospho-(deoxyribonucleotide)m = (deoxyribonucleotide)n+m + AMP + beta-nicotinamide D-nucleotide.. Its function is as follows. DNA ligase that catalyzes the formation of phosphodiester linkages between 5'-phosphoryl and 3'-hydroxyl groups in double-stranded DNA using NAD as a coenzyme and as the energy source for the reaction. It is essential for DNA replication and repair of damaged DNA. The polypeptide is DNA ligase (Synechococcus sp. (strain JA-2-3B'a(2-13)) (Cyanobacteria bacterium Yellowstone B-Prime)).